The primary structure comprises 734 residues: Elongation factor G, mitochondrial (734 aa).

A mitochondrion-targeting transit peptide spans 1-32 (MTSFLTSRFGGLALRNVMNNKNGINSFGLRCF). A tr-type G domain is found at 38 to 318 (SGLRNIGISA…GVIKYLPSPN (281 aa)). Residues 47–54 (AHIDSGKT), 114–118 (DTPGH), and 168–171 (NKLD) contribute to the GTP site.

The protein belongs to the TRAFAC class translation factor GTPase superfamily. Classic translation factor GTPase family. EF-G/EF-2 subfamily.

It localises to the mitochondrion. It catalyses the reaction GTP + H2O = GDP + phosphate + H(+). Its pathway is protein biosynthesis; polypeptide chain elongation. Functionally, mitochondrial GTPase that catalyzes the GTP-dependent ribosomal translocation step during translation elongation. During this step, the ribosome changes from the pre-translocational (PRE) to the post-translocational (POST) state as the newly formed A-site-bound peptidyl-tRNA and P-site-bound deacylated tRNA move to the P and E sites, respectively. Catalyzes the coordinated movement of the two tRNA molecules, the mRNA and conformational changes in the ribosome. The chain is Elongation factor G, mitochondrial (gfm1) from Dictyostelium discoideum (Social amoeba).